Reading from the N-terminus, the 578-residue chain is Vacuolar protein 8 (578 aa).

Glycine 2 is lipidated: N-myristoyl glycine. Residues cysteine 4, cysteine 5, and cysteine 7 are each lipidated (S-palmitoyl cysteine). Residues serine 11 and serine 16 each carry the phosphoserine modification. 9 ARM repeats span residues 37–75 (DKDQLDFYSGGPLKALTTLVYSDNLNLQRSAALAFAEIT), 76–114 (EKYVRQVSREVLEPILILLQSQDPQIQVAACAALGNLAV), 116–155 (NENKLLIVEMGGLEPLINQMMGDNVEVQCNAVGCITNLAT), 157–196 (DDNKHKIATSGALIPLTKLAKSKHIRVQRNATGALLNMTH), 198–237 (EENRKELVNAGAVPVLVSLLSSTDPDVQYYCTTALSNIAV), 239–280 (EANR…NLAS), 282–321 (TSYQLEIVRAGGLPHLVKLIQSDSIPLVLASVACIRNISI), 323–363 (PLNE…NLAA), and 407–446 (DVSKLDLLEANILDALIPMTFSQNQEVSGNAAAALANLCS). Lysine 77 participates in a covalent cross-link: Glycyl lysine isopeptide (Lys-Gly) (interchain with G-Cter in ubiquitin). Lysine 515 is covalently cross-linked (Glycyl lysine isopeptide (Lys-Gly) (interchain with G-Cter in ubiquitin)). Residues 527–557 (SGIDVKNPGSNNNPSSNDNNSNNNDTGSEHQ) form a disordered region. Positions 533-552 (NPGSNNNPSSNDNNSNNNDT) are enriched in low complexity.

Belongs to the beta-catenin family. As to quaternary structure, interacts with NVJ1. Forms heterotetramers of two VAC8 and two NVJ1 or two VAC8 and two ATG13. Post-translationally, palmitoylated on one or more of its N-terminal cysteine residues by PFA3, which is required for vacuole fusion.

It localises to the vacuole membrane. Its function is as follows. Functions in both vacuole inheritance and protein targeting from the cytoplasm to vacuole (cvt). Involved in the formation of nucleus-vacuole junctions (NVJs) during piecemeal microautophagy of the nucleus (PMN). NVJs are interorganelle interfaces mediated by NVJ1 in the nuclear envelope and VAC8 on the vacuole membrane. Together, NVJ1 and VAC8 form Velcro-like patches through which teardrop-like portions of the nucleus are pinched off into the vacuolar lumen and degraded by the PMN process. This is Vacuolar protein 8 (VAC8) from Saccharomyces cerevisiae (strain ATCC 204508 / S288c) (Baker's yeast).